The sequence spans 416 residues: Gamma-glutamyl phosphate reductase (416 aa).

The protein belongs to the gamma-glutamyl phosphate reductase family.

Its subcellular location is the cytoplasm. It catalyses the reaction L-glutamate 5-semialdehyde + phosphate + NADP(+) = L-glutamyl 5-phosphate + NADPH + H(+). The protein operates within amino-acid biosynthesis; L-proline biosynthesis; L-glutamate 5-semialdehyde from L-glutamate: step 2/2. In terms of biological role, catalyzes the NADPH-dependent reduction of L-glutamate 5-phosphate into L-glutamate 5-semialdehyde and phosphate. The product spontaneously undergoes cyclization to form 1-pyrroline-5-carboxylate. This chain is Gamma-glutamyl phosphate reductase, found in Vibrio vulnificus (strain YJ016).